A 117-amino-acid chain; its full sequence is Large ribosomal subunit protein bL19 (117 aa).

Belongs to the bacterial ribosomal protein bL19 family.

Its function is as follows. This protein is located at the 30S-50S ribosomal subunit interface and may play a role in the structure and function of the aminoacyl-tRNA binding site. The sequence is that of Large ribosomal subunit protein bL19 from Desulfosudis oleivorans (strain DSM 6200 / JCM 39069 / Hxd3) (Desulfococcus oleovorans).